A 141-amino-acid chain; its full sequence is uncharacterized protein (141 aa).

Residues 10-117 (IFCDIVQGSI…VPKYETGKGF (108 aa)) form the HIT domain. The Histidine triad motif motif lies at 102–106 (HFHLH).

This is an uncharacterized protein from Mycoplasma genitalium (strain ATCC 33530 / DSM 19775 / NCTC 10195 / G37) (Mycoplasmoides genitalium).